The chain runs to 304 residues: tRNA dimethylallyltransferase (304 aa).

9–16 (APTAAGKS) is an ATP binding site. 11-16 (TAAGKS) lines the substrate pocket.

It belongs to the IPP transferase family. Monomer. Mg(2+) is required as a cofactor.

The catalysed reaction is adenosine(37) in tRNA + dimethylallyl diphosphate = N(6)-dimethylallyladenosine(37) in tRNA + diphosphate. In terms of biological role, catalyzes the transfer of a dimethylallyl group onto the adenine at position 37 in tRNAs that read codons beginning with uridine, leading to the formation of N6-(dimethylallyl)adenosine (i(6)A). This Deinococcus geothermalis (strain DSM 11300 / CIP 105573 / AG-3a) protein is tRNA dimethylallyltransferase.